The sequence spans 616 residues: Chaperone protein DnaK (616 aa).

T175 is subject to Phosphothreonine; by autocatalysis. The disordered stretch occupies residues 579 to 616 (GGDPSQAGGFDPNAAGGAQQEPHDDNVVDADFKVDDDK). Basic and acidic residues predominate over residues 599–616 (EPHDDNVVDADFKVDDDK).

Belongs to the heat shock protein 70 family.

Functionally, acts as a chaperone. In Clostridium botulinum (strain Eklund 17B / Type B), this protein is Chaperone protein DnaK.